Here is a 350-residue protein sequence, read N- to C-terminus: uncharacterized protein (350 aa).

This is an uncharacterized protein from Methanocaldococcus jannaschii (strain ATCC 43067 / DSM 2661 / JAL-1 / JCM 10045 / NBRC 100440) (Methanococcus jannaschii).